A 346-amino-acid chain; its full sequence is Very-long-chain 3-oxoacyl-CoA reductase (346 aa).

A helical membrane pass occupies residues 19–39; the sequence is LIYGVLFVGVYKITTFTLSVG. Val65, Asp119, Asn146, Tyr220, Lys224, Val253, and Ser255 together coordinate NADP(+). The active-site Proton donor is the Tyr220. Lys224 serves as the catalytic Lowers pKa of active site Tyr.

The protein belongs to the short-chain dehydrogenases/reductases (SDR) family.

It is found in the endoplasmic reticulum membrane. The catalysed reaction is a very-long-chain (3R)-3-hydroxyacyl-CoA + NADP(+) = a very-long-chain 3-oxoacyl-CoA + NADPH + H(+). It participates in lipid metabolism; fatty acid biosynthesis. In terms of biological role, component of the microsomal membrane bound fatty acid elongation system, which produces the 26-carbon very long-chain fatty acids (VLCFA) from palmitate. Catalyzes the reduction of the 3-ketoacyl-CoA intermediate that is formed in each cycle of fatty acid elongation. VLCFAs serve as precursors for ceramide and sphingolipids. This chain is Very-long-chain 3-oxoacyl-CoA reductase, found in Debaryomyces hansenii (strain ATCC 36239 / CBS 767 / BCRC 21394 / JCM 1990 / NBRC 0083 / IGC 2968) (Yeast).